The following is a 120-amino-acid chain: Large ribosomal subunit protein eL18 (120 aa).

This sequence belongs to the eukaryotic ribosomal protein eL18 family. As to quaternary structure, part of the 50S ribosomal subunit.

This chain is Large ribosomal subunit protein eL18, found in Pyrococcus furiosus (strain ATCC 43587 / DSM 3638 / JCM 8422 / Vc1).